The primary structure comprises 249 residues: Geranylgeranylglyceryl phosphate synthase (249 aa).

Mg(2+) is bound by residues D20 and S49. Sn-glycerol 1-phosphate is bound by residues Y169–G175, G200–G201, and G222–N223.

It belongs to the GGGP/HepGP synthase family. Group II subfamily. As to quaternary structure, homohexamer. Mg(2+) serves as cofactor.

It carries out the reaction sn-glycerol 1-phosphate + (2E,6E,10E)-geranylgeranyl diphosphate = sn-3-O-(geranylgeranyl)glycerol 1-phosphate + diphosphate. Prenyltransferase that catalyzes the transfer of the geranylgeranyl moiety of geranylgeranyl diphosphate (GGPP) to the C3 hydroxyl of sn-glycerol-1-phosphate (G1P). The sequence is that of Geranylgeranylglyceryl phosphate synthase from Spirosoma linguale (strain ATCC 33905 / DSM 74 / LMG 10896 / Claus 1).